Consider the following 544-residue polypeptide: MKSLALALLVGGAIASGPQQQVLREPVDDPQAAETPLQKISDIFGHLSEQAGNVWEDVMDKFPDTLMDAITQTPPPKKHNRRPDSQWDHIVRGSDVQAVWVEGDAGEKHRKVGGRLDTYDLRVKAVDPSNLGIDTVKQYSGYLDDNENDKHLFYWFFESRNDPKNDPVVLWLNGGPGCSSLTGLFLELGPSSITKQLKVKYNEFSWNSNASVIFLDQPVNVGYSYSSSSVSNTQAAGKDVYALLTLFFEQFPEYSQQDFHIAGESYAGHYIPVFASEIMSHSHRNINLKSILVGNGLTDPLSQYPHYRPMACGEGGYPAVLSSSSCQAMDNALPRCLAMIQACYNTESRWSCVPASIYCNNALIGPYQRSGMNPYDVRSKCEGGNLCYTQLDDISKYLNQDAVMESLGAEVSSYESCNMDINRNFLFQGDWMQPYMRVVPTLLTQMPVLIYAGDADFICNWLGNKAWTEALEYPGHDEFAAAEMKNLTSLNHEDMKVIGQVKSAGNFTFMRLFGGGHMVPMDQPEASLEFFNRWLGGEWSAKSP.

The N-terminal stretch at 1 to 17 (MKSLALALLVGGAIASG) is a signal peptide. A propeptide spanning residues 18-124 (PQQQVLREPV…RLDTYDLRVK (107 aa)) is cleaved from the precursor. Disulfide bonds link cysteine 178–cysteine 417, cysteine 312–cysteine 326, cysteine 336–cysteine 359, cysteine 343–cysteine 352, and cysteine 381–cysteine 387. A glycan (N-linked (GlcNAc...) asparagine) is linked at asparagine 209. The active site involves serine 265. Aspartate 456 is an active-site residue. Residue asparagine 506 is glycosylated (N-linked (GlcNAc...) asparagine). Histidine 517 is a catalytic residue.

This sequence belongs to the peptidase S10 family.

The protein resides in the vacuole. The enzyme catalyses Release of a C-terminal amino acid with broad specificity.. Its function is as follows. Vacuolar carboxypeptidase involved in degradation of small peptides. Digests preferentially peptides containing an aliphatic or hydrophobic residue in P1' position, as well as methionine, leucine or phenylalanine in P1 position of ester substrate. This Ajellomyces capsulatus (strain G186AR / H82 / ATCC MYA-2454 / RMSCC 2432) (Darling's disease fungus) protein is Carboxypeptidase Y homolog A (CPYA).